We begin with the raw amino-acid sequence, 155 residues long: Sperm microtubule associated protein 1 (155 aa).

The protein is Sperm microtubule associated protein 1 (Spmap1) of Mus musculus (Mouse).